The sequence spans 322 residues: Heterogeneous nuclear ribonucleoprotein D-like (322 aa).

Residues 1 to 36 are disordered; the sequence is MTGTARSALPLPQSPARALRPSGAARAAPSLSPSRF. Residue arginine 6 is modified to Omega-N-methylarginine. Residues 14–36 are compositionally biased toward low complexity; that stretch reads SPARALRPSGAARAAPSLSPSRF. RRM domains follow at residues 51–133 and 136–215; these read NKMF…KGKE and KKVF…QPKE. N6-methyllysine is present on lysine 64. Residue lysine 112 forms a Glycyl lysine isopeptide (Lys-Gly) (interchain with G-Cter in SUMO2) linkage. At lysine 119 the chain carries N6-acetyllysine. A Phosphoserine modification is found at serine 144. 2 disordered regions span residues 216–251 and 299–322; these read VYRQQQQQQKGGRGAAAGGRGGARGRGRGQGQNWNQ and SGQQSTYGKASRGGGNHQNNYQPY. Positions 226-245 are enriched in gly residues; it reads GGRGAAAGGRGGARGRGRGQ. Residues 245-322 are necessary for interaction with TNPO1; the sequence is QGQNWNQGFN…GNHQNNYQPY (78 aa). The residue at position 310 (arginine 310) is a Dimethylated arginine; alternate. At arginine 310 the chain carries Omega-N-methylarginine; alternate.

As to quaternary structure, interacts with TNPO1 and ZNF148. Dimethylation of Arg-310 is probably of the asymmetric type.

Its subcellular location is the nucleus. It localises to the cytoplasm. Acts as a transcriptional regulator. Promotes transcription repression. Promotes transcription activation in differentiated myotubes. Binds to double- and single-stranded DNA sequences. Binds to the transcription suppressor CATR sequence of the COX5B promoter. Binds with high affinity to RNA molecules that contain AU-rich elements (AREs) found within the 3'-UTR of many proto-oncogenes and cytokine mRNAs. Binds both to nuclear and cytoplasmic poly(A) mRNAs. Binds to poly(G) and poly(A), but not to poly(U) or poly(C) RNA homopolymers. Binds to the 5'-ACUAGC-3' RNA consensus sequence. In Rattus norvegicus (Rat), this protein is Heterogeneous nuclear ribonucleoprotein D-like (Hnrnpdl).